Reading from the N-terminus, the 155-residue chain is Phospholipase A2 A2-actitoxin-Ucs2a (155 aa).

Residues 1 to 19 (MKNNIILVILLGISVFVDC) form the signal peptide. Residues 20 to 42 (LPLNDQEEDKSLNAQESEVSAVQ) constitute a propeptide that is removed on maturation. Disulfide bonds link Cys55–Cys118, Cys71–Cys87, Cys86–Cys143, Cys93–Cys136, Cys100–Cys129, and Cys122–Cys134. The Ca(2+) site is built by Gly72 and Gly74. The active site involves His90. Asp91 provides a ligand contact to Ca(2+). The active site involves Asp137.

The protein belongs to the phospholipase A2 family. Ca(2+) serves as cofactor.

The protein resides in the secreted. It localises to the nematocyst. The catalysed reaction is a 1,2-diacyl-sn-glycero-3-phosphocholine + H2O = a 1-acyl-sn-glycero-3-phosphocholine + a fatty acid + H(+). Its function is as follows. PLA2 catalyzes the calcium-dependent hydrolysis of the 2-acyl groups in 3-sn-phosphoglycerides. The sequence is that of Phospholipase A2 A2-actitoxin-Ucs2a from Urticina crassicornis (Mottled anemone).